A 580-amino-acid chain; its full sequence is 2-succinyl-5-enolpyruvyl-6-hydroxy-3-cyclohexene-1-carboxylate synthase (580 aa).

Residues 178-199 form a disordered region; that stretch reads LEPTPMPGDLTEPPAAAQPRDD.

It belongs to the TPP enzyme family. MenD subfamily. In terms of assembly, homodimer. Mg(2+) is required as a cofactor. Requires Mn(2+) as cofactor. The cofactor is thiamine diphosphate.

The enzyme catalyses isochorismate + 2-oxoglutarate + H(+) = 5-enolpyruvoyl-6-hydroxy-2-succinyl-cyclohex-3-ene-1-carboxylate + CO2. The protein operates within quinol/quinone metabolism; 1,4-dihydroxy-2-naphthoate biosynthesis; 1,4-dihydroxy-2-naphthoate from chorismate: step 2/7. Its pathway is quinol/quinone metabolism; menaquinone biosynthesis. Catalyzes the thiamine diphosphate-dependent decarboxylation of 2-oxoglutarate and the subsequent addition of the resulting succinic semialdehyde-thiamine pyrophosphate anion to isochorismate to yield 2-succinyl-5-enolpyruvyl-6-hydroxy-3-cyclohexene-1-carboxylate (SEPHCHC). The polypeptide is 2-succinyl-5-enolpyruvyl-6-hydroxy-3-cyclohexene-1-carboxylate synthase (Roseiflexus castenholzii (strain DSM 13941 / HLO8)).